We begin with the raw amino-acid sequence, 243 residues long: Probable transcriptional regulatory protein LCABL_11860 (243 aa).

The tract at residues 1–23 (MSGHSKWHNIQGRKNAQDSKRGK) is disordered.

The protein belongs to the TACO1 family.

It localises to the cytoplasm. This Lacticaseibacillus casei (strain BL23) (Lactobacillus casei) protein is Probable transcriptional regulatory protein LCABL_11860.